The sequence spans 463 residues: MDITPFLNRTLDIPLYQQLYRYFKENMHRGRIQKGMKLPSKRLLANQLSISQTTVERAYEQLAAEGYIVSKPRSGWFADYHDSDFAYDRMPSTTPIQQEAEENKQWIDFHYGNVDSSYFPFSAWRKSMVNSLDQYGHELYRPGHVLGEFELRTLIAEYLYQSRGVHCGPEQVIIGAGNPILLQILCQVFEPNISIGYEDPGYPRARKIFEANRMNIVPIPVDDEGICIQKIKEQQPNLVYVTPSHQFTLGTIMTINRRIQLLKWAAENQSFIIEDDYDGEFRYTGQPVPSLQGLDQHNRVIYMGTFSKSLLPSLRISYMILPSPLLKKGHEITSLYKQTVSCHSQLTLAEFIKNGEWQKHINRMRKLYRKKRAIVLEAVQRELGEHVRIRGENSGLRILLDVYLPFGEKELIEKAKKHGVKIYPVSLSYQHHPPTKTVSLGFAGVSESDIREGIKKLKAAWKI.

Residues 13–81 (IPLYQQLYRY…PRSGWFADYH (69 aa)) enclose the HTH gntR-type domain. Residues 41 to 60 (KRLLANQLSISQTTVERAYE) constitute a DNA-binding region (H-T-H motif). K308 bears the N6-(pyridoxal phosphate)lysine mark.

The protein in the C-terminal section; belongs to the class-I pyridoxal-phosphate-dependent aminotransferase family. The cofactor is pyridoxal 5'-phosphate.

This is an uncharacterized protein from Bacillus subtilis (strain 168).